Consider the following 225-residue polypeptide: Ribonuclease 3 (225 aa).

One can recognise an RNase III domain in the interval 7-129 (IPRLCRTLGY…IIGAIYLDSE (123 aa)). Glu42 contacts Mg(2+). The active site involves Asp46. Mg(2+)-binding residues include Asp115 and Glu118. Glu118 is a catalytic residue. Residues 155 to 225 (DPKTLLQEHL…AAQVLELMKK (71 aa)) form the DRBM domain.

The protein belongs to the ribonuclease III family. In terms of assembly, homodimer. The cofactor is Mg(2+).

The protein resides in the cytoplasm. It catalyses the reaction Endonucleolytic cleavage to 5'-phosphomonoester.. Digests double-stranded RNA. Involved in the processing of primary rRNA transcript to yield the immediate precursors to the large and small rRNAs (23S and 16S). Processes some mRNAs, and tRNAs when they are encoded in the rRNA operon. Processes pre-crRNA and tracrRNA of type II CRISPR loci if present in the organism. In Shewanella halifaxensis (strain HAW-EB4), this protein is Ribonuclease 3.